Reading from the N-terminus, the 150-residue chain is Large ribosomal subunit protein bL9 (150 aa).

Belongs to the bacterial ribosomal protein bL9 family.

In terms of biological role, binds to the 23S rRNA. In Burkholderia pseudomallei (strain 668), this protein is Large ribosomal subunit protein bL9.